Consider the following 506-residue polypeptide: Sucrose transport protein SUT3 (506 aa).

Residues 1–20 are Cytoplasmic-facing; the sequence is MAVDMELDGGGDGKGKAPPQ. The helical transmembrane segment at 21 to 41 threads the bilayer; the sequence is ISLSGLFLACMVAGGVQYGWA. Topologically, residues 42–54 are extracellular; that stretch reads LQLSLLTPYVQTL. The helical transmembrane segment at 55–75 threads the bilayer; sequence GIPHALTSVMWLCGPIAGLIV. At 76–94 the chain is on the cytoplasmic side; the sequence is QPCVGLYSDKCTSSLGRRR. The chain crosses the membrane as a helical span at residues 95–115; sequence PFILTGCIIICISVIVIGFSS. The Extracellular portion of the chain corresponds to 116 to 135; sequence DIGYALGDTTEDCKVYRGPR. A helical membrane pass occupies residues 136 to 156; that stretch reads YHAAAAFILGFWLLDFSNNTV. The Cytoplasmic portion of the chain corresponds to 157 to 171; it reads QGPARALMADLSGRH. Residues 172–192 form a helical membrane-spanning segment; that stretch reads GPSAANAIFCSWMALGNILGY. Topologically, residues 193–220 are extracellular; that stretch reads SSGSTNDWHKWFPFLMTRACCEACANLK. The helical transmembrane segment at 221-241 threads the bilayer; that stretch reads AAFLVAVVFLGLSTAVTMVFA. At 242-275 the chain is on the cytoplasmic side; it reads REVALDPVAAAKRNEGEASGLLAVFKGMKNLPVG. Residues 276-296 form a helical membrane-spanning segment; it reads MPSVLIVTGLTWLSWFPFILF. The Extracellular portion of the chain corresponds to 297 to 327; the sequence is DTDWMGREIYHGRPDGSPAEVTAFQEGVRQG. A helical membrane pass occupies residues 328–348; it reads AFGLLLNSIVLGISSFLIEPM. Topologically, residues 349–355 are cytoplasmic; the sequence is CRRLGAR. Residues 356–376 form a helical membrane-spanning segment; that stretch reads AVWVMSSAVVCVAMAAVSVLS. Topologically, residues 377 to 404 are extracellular; sequence AWSLGDFGGSVQDAARAPAEEGGVRASA. A helical transmembrane segment spans residues 405–425; sequence LALFVFLGLPFAVLCSVPFAV. Residues 426-441 lie on the Cytoplasmic side of the membrane; that stretch reads TAQLAASRGGGQGLCT. A helical transmembrane segment spans residues 442–462; it reads GVLNISIVVPQMAIALGAGPW. The Extracellular portion of the chain corresponds to 463–470; sequence DELFGEGN. A helical transmembrane segment spans residues 471 to 491; that stretch reads IPAFAMASVFAAAAAAAGVVL. At 492-506 the chain is on the cytoplasmic side; that stretch reads LPKVSVRSVSMAGGH.

This sequence belongs to the glycoside-pentoside-hexuronide (GPH) cation symporter transporter (TC 2.A.2.4) family. As to quaternary structure, homodimer. Widely expressed. Highest expression in sink leaves and lowest in germinating seeds.

The protein resides in the cell membrane. It participates in glycan biosynthesis; sucrose metabolism. Functionally, responsible for the transport of sucrose into the cell, with the concomitant uptake of protons (symport system). May also transport other glucosides. The chain is Sucrose transport protein SUT3 (SUT3) from Oryza sativa subsp. japonica (Rice).